Reading from the N-terminus, the 386-residue chain is Probable family 17 glucosidase SCW4 (386 aa).

An N-terminal signal peptide occupies residues 1 to 19 (MRLSNLIASASLLSAATLA). Positions 20–30 (APANHEHKDKR) are excised as a propeptide. The interval 88-127 (ENNSQVSAAASPASSSAATSTQSSSSSQASSSSSSGEDVS) is disordered. The N-linked (GlcNAc...) asparagine glycan is linked to Asn89. The Nucleophile role is filled by Glu323.

The protein belongs to the glycosyl hydrolase 17 family. In terms of processing, N-glycosylated.

It localises to the secreted. It is found in the cell wall. Glucanases possibly play a role in cell expansion during growth, in cell-cell fusion during mating, and in spore release during sporulation. The polypeptide is Probable family 17 glucosidase SCW4 (SCW4) (Saccharomyces cerevisiae (strain ATCC 204508 / S288c) (Baker's yeast)).